We begin with the raw amino-acid sequence, 138 residues long: U1 small nuclear ribonucleoprotein C (138 aa).

The Matrin-type zinc-finger motif lies at 4 to 36; the sequence is YYCDYCDTFLTHDSPSVRKTHNNGRKHKENVRF. Residues 58-138 form a disordered region; that stretch reads QSKPNSQMPP…MGRPPMSLRS (81 aa). Positions 67–109 are enriched in pro residues; sequence PNAPPGLMPPPGMLPPPGGMPPGRMPPQGLPFPPPGPIPPPPG. Over residues 113-138 the composition is skewed to low complexity; it reads MRPPHGQMHMGGPRPQMGRPPMSLRS.

The protein belongs to the U1 small nuclear ribonucleoprotein C family. In terms of assembly, U1 snRNP is composed of the 7 core Sm proteins B/B', D1, D2, D3, E, F and G that assemble in a heptameric protein ring on the Sm site of the small nuclear RNA to form the core snRNP, and at least 3 U1 snRNP-specific proteins U1-70K, U1-A and U1-C. U1-C interacts with U1 snRNA and the 5' splice-site region of the pre-mRNA.

The protein localises to the nucleus. In terms of biological role, component of the spliceosomal U1 snRNP, which is essential for recognition of the pre-mRNA 5' splice-site and the subsequent assembly of the spliceosome. U1-C is directly involved in initial 5' splice-site recognition for both constitutive and regulated alternative splicing. The interaction with the 5' splice-site seems to precede base-pairing between the pre-mRNA and the U1 snRNA. Stimulates commitment or early (E) complex formation by stabilizing the base pairing of the 5' end of the U1 snRNA and the 5' splice-site region. The protein is U1 small nuclear ribonucleoprotein C of Nematostella vectensis (Starlet sea anemone).